A 381-amino-acid polypeptide reads, in one-letter code: Cytochrome b (381 aa).

4 helical membrane passes run 34 to 54 (FGSL…FLAM), 78 to 99 (WLIR…YLHI), 114 to 134 (WNIG…GYVL), and 179 to 199 (FFAF…IHLL). Residues His84 and His98 each contribute to the heme b site. Residues His183 and His197 each contribute to the heme b site. His202 contributes to the a ubiquinone binding site. Helical transmembrane passes span 227–247 (YKDI…TLFI), 289–309 (LGGV…PLLQ), 321–341 (MTQI…WIGG), and 348–368 (FIMV…IIIP).

It belongs to the cytochrome b family. As to quaternary structure, the cytochrome bc1 complex contains 3 respiratory subunits (MT-CYB, CYC1 and UQCRFS1), 2 core proteins (UQCRC1 and UQCRC2) and probably 6 low-molecular weight proteins. It depends on heme b as a cofactor.

It is found in the mitochondrion inner membrane. Component of the ubiquinol-cytochrome c reductase complex (complex III or cytochrome b-c1 complex) that is part of the mitochondrial respiratory chain. The b-c1 complex mediates electron transfer from ubiquinol to cytochrome c. Contributes to the generation of a proton gradient across the mitochondrial membrane that is then used for ATP synthesis. The chain is Cytochrome b (mt-cyb) from Galeocerdo cuvier (Tiger shark).